The primary structure comprises 323 residues: MEILKSMIDPKIVMAIVISFIVASILGPIIIPLLHKLKFGQNIRQEGPKSHLKKAGTPTIGGLIFIFATIITMFIMVGNPTDEAMIALYSFVGFGFVGFLDDLLKIIKKKNEGLTSGQKMILLLIVSGFLTWYAYKYIGTSINIPFLNGQINFGLFYIPFVMFYFAGVTNAVNLTDGLDGLATSVTVLVTTFLGIISYNLGHISLAIFCVALAGALLAFLRFNAFPARVFMGDTGSLALGGAVAMVALILKMPLILVLIGIIYVIETLSVILQVASFKLTGKRIFKMAPIHHHFEQLGWSETKIVSVFSIITVVFCFIAFASL.

9 helical membrane-spanning segments follow: residues 12-32, 58-78, 84-104, 120-140, 151-171, 177-197, 200-220, 229-250, and 303-323; these read IVMA…IIIP, PTIG…IMVG, AMIA…DDLL, MILL…YIGT, INFG…VTNA, GLDG…GIIS, LGHI…LAFL, VFMG…ALIL, and KIVS…FASL.

Belongs to the glycosyltransferase 4 family. MraY subfamily. Mg(2+) is required as a cofactor.

Its subcellular location is the cell membrane. It carries out the reaction UDP-N-acetyl-alpha-D-muramoyl-L-alanyl-gamma-D-glutamyl-meso-2,6-diaminopimeloyl-D-alanyl-D-alanine + di-trans,octa-cis-undecaprenyl phosphate = di-trans,octa-cis-undecaprenyl diphospho-N-acetyl-alpha-D-muramoyl-L-alanyl-D-glutamyl-meso-2,6-diaminopimeloyl-D-alanyl-D-alanine + UMP. The protein operates within cell wall biogenesis; peptidoglycan biosynthesis. In terms of biological role, catalyzes the initial step of the lipid cycle reactions in the biosynthesis of the cell wall peptidoglycan: transfers peptidoglycan precursor phospho-MurNAc-pentapeptide from UDP-MurNAc-pentapeptide onto the lipid carrier undecaprenyl phosphate, yielding undecaprenyl-pyrophosphoryl-MurNAc-pentapeptide, known as lipid I. The chain is Phospho-N-acetylmuramoyl-pentapeptide-transferase from Clostridium perfringens (strain ATCC 13124 / DSM 756 / JCM 1290 / NCIMB 6125 / NCTC 8237 / Type A).